A 1328-amino-acid polypeptide reads, in one-letter code: Mitogen-activated protein kinase kinase kinase 19 (1328 aa).

The segment covering 1–19 (MSSMPKPERHAESLLDICH) has biased composition (basic and acidic residues). 4 disordered regions span residues 1-28 (MSSMPKPERHAESLLDICHDTNSSPTDL), 44-74 (RSEEFDQDGDCSHSTLVNEEEDPSGGRQDWQ), 344-380 (VREEDIDCHGSKTRKPEEENSQYLSSRKNESSVAKNY), and 524-561 (QENDKHKMNSHRSKLDSKTKTSKKTPQNFVISTEGPIK). Basic and acidic residues predominate over residues 344–361 (VREEDIDCHGSKTRKPEE). The segment covering 364 to 377 (SQYLSSRKNESSVA) has biased composition (polar residues). Positions 524-542 (QENDKHKMNSHRSKLDSKT) are enriched in basic and acidic residues. The 264-residue stretch at 1061-1324 (WTKGEILGKG…ALQLLKHSFL (264 aa)) folds into the Protein kinase domain. ATP contacts are provided by residues 1067–1075 (LGKGAYGTV) and K1089. The Proton acceptor role is filled by D1186.

This sequence belongs to the protein kinase superfamily. STE Ser/Thr protein kinase family. STE20 subfamily.

The catalysed reaction is L-seryl-[protein] + ATP = O-phospho-L-seryl-[protein] + ADP + H(+). It carries out the reaction L-threonyl-[protein] + ATP = O-phospho-L-threonyl-[protein] + ADP + H(+). The sequence is that of Mitogen-activated protein kinase kinase kinase 19 (MAP3K19) from Homo sapiens (Human).